Consider the following 158-residue polypeptide: MEINREEIEKKVKEIVEPVIRGMGFKLFDVEFKPEGRGWVLRIIADKEGGITIKDCEEISRKVSALLDVEDIIPFSYLLEITSPGLTRPLTKVEHYDFFKGRLVKLILKEPIEGKREVVGYIEDVKNGIIDIREKEKGKVLHIPFSAIAKGRLEIEGW.

It belongs to the RimP family.

It localises to the cytoplasm. Functionally, required for maturation of 30S ribosomal subunits. The sequence is that of Ribosome maturation factor RimP from Aquifex aeolicus (strain VF5).